A 653-amino-acid polypeptide reads, in one-letter code: Structural protein ORF653 (653 aa).

The stretch at 300-330 (AKEETKQETKQETGKEEEEKKETKQESQEQL) forms a coiled coil. Residues 302–326 (EETKQETKQETGKEEEEKKETKQES) are compositionally biased toward basic and acidic residues. Disordered stretches follow at residues 302–329 (EETKQETKQETGKEEEEKKETKQESQEQ), 344–388 (GQPA…ENTP), and 626–653 (AGQQEETDETTEEEEEEEEEGNDTVKLS). Over residues 371–381 (EENNAEAPQQR) the composition is skewed to low complexity. Residues 505 to 649 (KEQELYKELD…EEEEEEGNDT (145 aa)) adopt a coiled-coil conformation. The segment covering 630–647 (EETDETTEEEEEEEEEGN) has biased composition (acidic residues).

Its subcellular location is the virion. The sequence is that of Structural protein ORF653 from Acidianus two-tailed virus (ATV).